Consider the following 63-residue polypeptide: Large ribosomal subunit protein uL29 (63 aa).

The protein belongs to the universal ribosomal protein uL29 family.

The chain is Large ribosomal subunit protein uL29 from Shigella flexneri.